Here is a 220-residue protein sequence, read N- to C-terminus: MLDGASTAPSEAERCIIAMMLMQIALDTHDEVTDDGGDLRARQLVVLAGDLYSGLYYELLARSGETALIRSFAEAVRDINEQKVRLYEKKVERIESLFAAVGTIESALLVKLADRMAAPQWGQFAYSYLLMRRLLLEQEAFIRTGASVLFEQMAQIAFPRAKTLTKEQKRHLLRFCRRYIDGCREALFAAKLPVNGLLQLRVAELSGGFQAIAKKTVEEG.

As to quaternary structure, heterodimer of component I and II.

The catalysed reaction is 4 isopentenyl diphosphate + (2E,6E)-farnesyl diphosphate = all-trans-heptaprenyl diphosphate + 4 diphosphate. In terms of biological role, supplies heptaprenyl diphosphate, the precursor for the side chain of the isoprenoid quinone menaquinone-7 (MQ-7). This chain is Heptaprenyl diphosphate synthase component 1 (hepS), found in Geobacillus stearothermophilus (Bacillus stearothermophilus).